The chain runs to 207 residues: 2,3-bisphosphoglycerate-dependent phosphoglycerate mutase (207 aa).

Substrate contacts are provided by residues 10–17 (RHGQSEWN), 23–24 (TG), R62, 89–92 (ERDY), K100, 116–117 (RR), and 160–161 (GN). Residue H11 is the Tele-phosphohistidine intermediate of the active site. The active-site Proton donor/acceptor is E89.

It belongs to the phosphoglycerate mutase family. BPG-dependent PGAM subfamily. Homodimer.

It catalyses the reaction (2R)-2-phosphoglycerate = (2R)-3-phosphoglycerate. It functions in the pathway carbohydrate degradation; glycolysis; pyruvate from D-glyceraldehyde 3-phosphate: step 3/5. Functionally, catalyzes the interconversion of 2-phosphoglycerate and 3-phosphoglycerate. The chain is 2,3-bisphosphoglycerate-dependent phosphoglycerate mutase from Bradyrhizobium diazoefficiens (strain JCM 10833 / BCRC 13528 / IAM 13628 / NBRC 14792 / USDA 110).